A 163-amino-acid chain; its full sequence is NADH-quinone oxidoreductase subunit I (163 aa).

2 consecutive 4Fe-4S ferredoxin-type domains span residues 54 to 84 and 94 to 123; these read LRRY…IESE and IVYD…ETQI. [4Fe-4S] cluster contacts are provided by Cys64, Cys67, Cys70, Cys74, Cys103, Cys106, Cys109, and Cys113.

The protein belongs to the complex I 23 kDa subunit family. As to quaternary structure, NDH-1 is composed of 14 different subunits. Subunits NuoA, H, J, K, L, M, N constitute the membrane sector of the complex. It depends on [4Fe-4S] cluster as a cofactor.

The protein localises to the cell inner membrane. It carries out the reaction a quinone + NADH + 5 H(+)(in) = a quinol + NAD(+) + 4 H(+)(out). In terms of biological role, NDH-1 shuttles electrons from NADH, via FMN and iron-sulfur (Fe-S) centers, to quinones in the respiratory chain. The immediate electron acceptor for the enzyme in this species is believed to be ubiquinone. Couples the redox reaction to proton translocation (for every two electrons transferred, four hydrogen ions are translocated across the cytoplasmic membrane), and thus conserves the redox energy in a proton gradient. This Ruthia magnifica subsp. Calyptogena magnifica protein is NADH-quinone oxidoreductase subunit I.